Consider the following 437-residue polypeptide: Serine--tRNA ligase (437 aa).

227-229 (TAE) contributes to the L-serine binding site. ATP is bound by residues 258 to 260 (RSE) and V274. E281 contacts L-serine. 347–350 (ETHS) contacts ATP. Position 382 (T382) interacts with L-serine.

It belongs to the class-II aminoacyl-tRNA synthetase family. Type-1 seryl-tRNA synthetase subfamily. As to quaternary structure, homodimer. The tRNA molecule binds across the dimer.

It localises to the cytoplasm. It catalyses the reaction tRNA(Ser) + L-serine + ATP = L-seryl-tRNA(Ser) + AMP + diphosphate + H(+). The enzyme catalyses tRNA(Sec) + L-serine + ATP = L-seryl-tRNA(Sec) + AMP + diphosphate + H(+). It participates in aminoacyl-tRNA biosynthesis; selenocysteinyl-tRNA(Sec) biosynthesis; L-seryl-tRNA(Sec) from L-serine and tRNA(Sec): step 1/1. Catalyzes the attachment of serine to tRNA(Ser). Is also able to aminoacylate tRNA(Sec) with serine, to form the misacylated tRNA L-seryl-tRNA(Sec), which will be further converted into selenocysteinyl-tRNA(Sec). The sequence is that of Serine--tRNA ligase from Deinococcus geothermalis (strain DSM 11300 / CIP 105573 / AG-3a).